We begin with the raw amino-acid sequence, 559 residues long: Inositol-3-phosphate synthase 1 (559 aa).

The NAD(+) site is built by Gly67, Gly68, Asn69, Asn70, Asp141, Ser177, Val178, Gln188, Arg191, Thr228, Ala229, Asn230, Thr231, Gly278, Ser279, Asp303, Ser306, Asn337, Asn338, Asp339, and Lys352. The residue at position 279 (Ser279) is a Phosphoserine. Ser357 is modified (phosphoserine). Residues Gly390, Asp391, Asp419, and Ser420 each contribute to the NAD(+) site.

Belongs to the myo-inositol 1-phosphate synthase family. Requires NAD(+) as cofactor.

The protein resides in the cytoplasm. The catalysed reaction is D-glucose 6-phosphate = 1D-myo-inositol 3-phosphate. The protein operates within polyol metabolism; myo-inositol biosynthesis; myo-inositol from D-glucose 6-phosphate: step 1/2. Key enzyme in myo-inositol biosynthesis pathway that catalyzes the conversion of glucose 6-phosphate to 1-myo-inositol 1-phosphate in a NAD-dependent manner. Rate-limiting enzyme in the synthesis of all inositol-containing compounds. This is Inositol-3-phosphate synthase 1 (ISYNA1) from Macaca fascicularis (Crab-eating macaque).